The following is a 914-amino-acid chain: Alanine--tRNA ligase (914 aa).

His-613, His-617, Cys-717, and His-721 together coordinate Zn(2+).

This sequence belongs to the class-II aminoacyl-tRNA synthetase family. Zn(2+) serves as cofactor.

The protein localises to the cytoplasm. It carries out the reaction tRNA(Ala) + L-alanine + ATP = L-alanyl-tRNA(Ala) + AMP + diphosphate. Its function is as follows. Catalyzes the attachment of alanine to tRNA(Ala) in a two-step reaction: alanine is first activated by ATP to form Ala-AMP and then transferred to the acceptor end of tRNA(Ala). Also edits incorrectly charged Ser-tRNA(Ala) and Gly-tRNA(Ala) via its editing domain. This chain is Alanine--tRNA ligase, found in Pyrococcus abyssi (strain GE5 / Orsay).